Consider the following 546-residue polypeptide: uncharacterized protein (546 aa).

Transmembrane regions (helical) follow at residues Ile-4–Leu-23, Gly-30–Ser-47, Ile-57–Val-79, Ala-91–Phe-113, and Pro-155–Val-177. RCK C-terminal domains are found at residues Gly-189–Glu-274 and Val-275–Asp-359. Helical transmembrane passes span Phe-372 to Thr-394, Phe-399 to Trp-421, Ile-434 to Ala-456, Gly-460 to Gly-482, Pro-489 to Leu-511, and Ile-521 to Thr-543.

It belongs to the AAE transporter (TC 2.A.81) family.

It localises to the cell membrane. This is an uncharacterized protein from Geobacter sulfurreducens (strain ATCC 51573 / DSM 12127 / PCA).